A 134-amino-acid polypeptide reads, in one-letter code: T-cell receptor beta chain V region CTL-F3 (134 aa).

The first 19 residues, 1 to 19 (MAPRLLFCLVLCFLRAEPT), serve as a signal peptide directing secretion. Residues 20-115 (NAGVIQTPRH…SAVYLCASSL (96 aa)) form a v segment region. A disulfide bond links C42 and C111. The N-linked (GlcNAc...) asparagine glycan is linked to N90. The d segment stretch occupies residues 116 to 119 (STGV). The segment at 120–134 (SYEQYFGPGTRLTVL) is j segment.

The polypeptide is T-cell receptor beta chain V region CTL-F3 (Mus musculus (Mouse)).